The primary structure comprises 102 residues: Large ribosomal subunit protein uL24 (102 aa).

The protein belongs to the universal ribosomal protein uL24 family. In terms of assembly, part of the 50S ribosomal subunit.

In terms of biological role, one of two assembly initiator proteins, it binds directly to the 5'-end of the 23S rRNA, where it nucleates assembly of the 50S subunit. Functionally, one of the proteins that surrounds the polypeptide exit tunnel on the outside of the subunit. The protein is Large ribosomal subunit protein uL24 of Finegoldia magna (strain ATCC 29328 / DSM 20472 / WAL 2508) (Peptostreptococcus magnus).